The primary structure comprises 332 residues: Palmitoyltransferase ZDHHC15B (332 aa).

Residues 1 to 14 lie on the Cytoplasmic side of the membrane; the sequence is MALSRALRCCQRIF. Residues 15 to 35 form a helical membrane-spanning segment; it reads SWIPVIIISSVVLWSYYAYVF. Residues 36 to 50 lie on the Lumenal side of the membrane; sequence ELCFVTLSNNLERVT. The helical transmembrane segment at 51–71 threads the bilayer; it reads YLLIFHVCFIMFCWTYWKAIF. Over 72–166 the chain is Cytoplasmic; it reads TPPSTPTKKF…NNCVGFSNYK (95 aa). In terms of domain architecture, DHHC spans 123 to 173; that stretch reads RFCDRCQVIKPDRCHHCSVCETCVLKMDHHCPWVNNCVGFSNYKFFLLFLS. Residues Cys-125 and Cys-128 each contribute to the Zn(2+) site. Lys-132 contacts substrate. His-138, Cys-139, Cys-142, Cys-145, and His-152 together coordinate Zn(2+). Cys-153 serves as the catalytic S-palmitoyl cysteine intermediate. Cys-159 is a binding site for Zn(2+). A helical membrane pass occupies residues 167 to 187; sequence FFLLFLSYSMIYCVFIASTVF. At 188 to 204 the chain is on the lumenal side; that stretch reads QYFLKFWVGDLPNGPAK. Residues 205 to 228 form a helical membrane-spanning segment; it reads FHVLFLLFVALMFFVSLMFLFGYH. Residues 229–332 are Cytoplasmic-facing; sequence CWLVAKNRST…GSSLLIRTES (104 aa). Residues 305–332 form a disordered region; sequence EEKWVEDGGSDEESADENGSSLLIRTES.

It belongs to the DHHC palmitoyltransferase family. Post-translationally, autopalmitoylated (in vitro).

The protein localises to the golgi apparatus membrane. The protein resides in the postsynaptic density. The enzyme catalyses L-cysteinyl-[protein] + hexadecanoyl-CoA = S-hexadecanoyl-L-cysteinyl-[protein] + CoA. The catalysed reaction is L-cysteinyl-[protein] + tetradecanoyl-CoA = S-tetradecanoyl-L-cysteinyl-[protein] + CoA. It carries out the reaction L-cysteinyl-[protein] + octadecanoyl-CoA = S-octadecanoyl-L-cysteinyl-[protein] + CoA. In terms of biological role, palmitoyltransferase that catalyzes the addition of palmitate onto various protein substrates. Has no stringent fatty acid selectivity and in addition to palmitate can also transfer onto target proteins myristate from tetradecanoyl-CoA and stearate from octadecanoyl-CoA. May thereby regulate target proteins association and localization to membranes. In the nervous system, probably catalyzes the palmitoylation of synaptic proteins and is involved in the differentiation of dopaminergic neurons and the development of the diencephalon. This chain is Palmitoyltransferase ZDHHC15B (zdhhc15b), found in Danio rerio (Zebrafish).